We begin with the raw amino-acid sequence, 242 residues long: Small ribosomal subunit protein uS2 (242 aa).

The protein belongs to the universal ribosomal protein uS2 family.

The chain is Small ribosomal subunit protein uS2 from Shewanella loihica (strain ATCC BAA-1088 / PV-4).